The following is a 237-amino-acid chain: Class B acid phosphatase (237 aa).

Positions 1-23 (MKKITLALSAVCLLFTLNHSANA) are cleaved as a signal peptide. Asp-69 (nucleophile) is an active-site residue. The Mg(2+) site is built by Asp-69 and Asp-71. Asp-71 acts as the Proton donor in catalysis. Substrate contacts are provided by residues 137-138 (TG) and Lys-177. Asp-192 lines the Mg(2+) pocket.

It belongs to the class B bacterial acid phosphatase family. In terms of assembly, homotetramer. Requires Mg(2+) as cofactor.

It localises to the periplasm. The catalysed reaction is a phosphate monoester + H2O = an alcohol + phosphate. Its function is as follows. Dephosphorylates several organic phosphate monoesters including monophosphate nucleotides (NMPs), coenzyme A (CoA), nicotinamide adenine dinucleotide phosphate (NADP), flavin mononucleotide (FMN) and phosphorylated 5-6 carbon sugars in vitro. Also has a phosphotransferase activity catalyzing the transfer of low-energy phosphate groups from organic phosphate monoesters to free hydroxyl groups of various organic compounds. The sequence is that of Class B acid phosphatase (aphA) from Salmonella typhi.